Consider the following 94-residue polypeptide: MNLYDVIKKPLITEKTTIEKDSKNVVSFEVDRDANKIEIKEAVEKLFKVEVAEVNTVNVAGKVKRFGRHYGKRSNWKKAYVTLKEGSSVDFFEI.

It belongs to the universal ribosomal protein uL23 family. In terms of assembly, part of the 50S ribosomal subunit. Contacts protein L29, and trigger factor when it is bound to the ribosome.

Functionally, one of the early assembly proteins it binds 23S rRNA. One of the proteins that surrounds the polypeptide exit tunnel on the outside of the ribosome. Forms the main docking site for trigger factor binding to the ribosome. This is Large ribosomal subunit protein uL23 from Geobacter sulfurreducens (strain ATCC 51573 / DSM 12127 / PCA).